Reading from the N-terminus, the 224-residue chain is Artemin (224 aa).

The signal sequence occupies residues 1–39 (MELGLGEPTALSHCLRPRWQPALWPTLAALALLSSVTEA). The propeptide occupies 40–111 (SLDPMSRSPA…AALRGARAAR (72 aa)). Positions 41 to 124 (LDPMSRSPAS…RSSRARATDA (84 aa)) are disordered. Over residues 80–95 (RPPPQSPQPAPPPPGP) the composition is skewed to pro residues. A compositionally biased stretch (low complexity) spans 96 to 116 (ALQSPPAALRGARAARAGTRS). Intrachain disulfides connect Cys-127–Cys-192, Cys-154–Cys-220, and Cys-158–Cys-222. N-linked (GlcNAc...) asparagine glycosylation is present at Asn-206.

This sequence belongs to the TGF-beta family. GDNF subfamily. As to quaternary structure, homodimer; disulfide-linked. Interacts with GFRA3 coreceptor and RET: forms a 2:2:2 ternary complex composed of ARTN ligand, GFRA3 and RET receptor. Cochlea. Expressed at higher level in sesorineural epithelium than in the modiolus region or substantia nigra.

It localises to the secreted. Its function is as follows. Growth factor that supports the survival of sensory and sympathetic peripheral neurons in culture and also supports the survival of dopaminergic neurons of the ventral mid-brain. Acts by binding to its coreceptor, GFRA3, leading to autophosphorylation and activation of the RET receptor. Strong attractant of gut hematopoietic cells thus promoting the formation Peyer's patch-like structures, a major component of the gut-associated lymphoid tissue. The chain is Artemin (Artn) from Rattus norvegicus (Rat).